The primary structure comprises 124 residues: Small ribosomal subunit protein uS11 (124 aa).

The segment at 102–124 (RIGRIEDATPIPHDGTTPKRKNR) is disordered.

This sequence belongs to the universal ribosomal protein uS11 family. Part of the 30S ribosomal subunit.

Its function is as follows. Located on the platform of the 30S subunit. This is Small ribosomal subunit protein uS11 from Methanococcus maripaludis (strain C5 / ATCC BAA-1333).